The following is a 238-amino-acid chain: 3-deoxy-D-manno-octulosonic acid kinase (238 aa).

Asp167 is an active-site residue.

The protein belongs to the protein kinase superfamily. KdkA/RfaP family.

Its subcellular location is the cell inner membrane. The catalysed reaction is an alpha-Kdo-(2-&gt;6)-lipid IVA + ATP = a 4-O-phospho-alpha-Kdo-(2-&gt;6)-lipid IVA + ADP + H(+). It functions in the pathway bacterial outer membrane biogenesis; LPS core biosynthesis. Its function is as follows. Catalyzes the ATP-dependent phosphorylation of the 3-deoxy-D-manno-octulosonic acid (Kdo) residue in Kdo-lipid IV(A) at the 4-OH position. The protein is 3-deoxy-D-manno-octulosonic acid kinase of Vibrio parahaemolyticus serotype O3:K6 (strain RIMD 2210633).